We begin with the raw amino-acid sequence, 425 residues long: Perilipin-2 (425 aa).

The residue at position 2 (Ala-2) is an N-acetylalanine. Ser-213 carries the post-translational modification Phosphoserine. Tyr-230 carries the phosphotyrosine modification.

The protein belongs to the perilipin family. In terms of assembly, interacts with IRGC. Post-translationally, acylated; primarily with C14, C16 and C18 fatty acids. Phosphorylation at Tyr-230 by isoform 1 of CHKA (CHKalpha2) promotes dissociation from lipid droplets: dissociation is followed by recruitment of autophagosome machinery to lipid droplets and subsequent lipid droplet lipolysis. In terms of processing, polyubiquitination of Nt-acetylatable A-PLIN2 by MARCHF6 lead to degradation by 26S proteasomes. Adipose tissue specific. Expressed abundantly and preferentially in fat pads.

It localises to the membrane. The protein localises to the lipid droplet. Functionally, structural component of lipid droplets, which is required for the formation and maintenance of lipid storage droplets. This is Perilipin-2 from Mus musculus (Mouse).